The sequence spans 634 residues: Chaperone protein HtpG (634 aa).

The a; substrate-binding stretch occupies residues 1 to 342 (MTVETDKQTL…SSDLSLNVSR (342 aa)). Residues 343-559 (EILQSGPVVD…QGDLGLQMRQ (217 aa)) are b. A c region spans residues 560–634 (LLEASGQAVP…LNKLLLELSA (75 aa)).

This sequence belongs to the heat shock protein 90 family. Homodimer.

The protein resides in the cytoplasm. In terms of biological role, molecular chaperone. Has ATPase activity. This Xanthomonas axonopodis pv. citri (strain 306) protein is Chaperone protein HtpG.